The chain runs to 302 residues: Lysosomal thioesterase PPT2 (302 aa).

Residues 1-27 (MPGLWRQRLPSAWALLLLPFLPLLLPA) form the signal peptide. The N-linked (GlcNAc...) asparagine glycan is linked to Asn60. Intrachain disulfides connect Cys109–Cys117 and Cys165–Cys176. Ser111 functions as the Nucleophile in the catalytic mechanism. Asn190 and Asn206 each carry an N-linked (GlcNAc...) asparagine glycan. Asp228 is an active-site residue. N-linked (GlcNAc...) asparagine glycosylation is present at Asn245. A disulfide bond links Cys276 and Cys296. His283 is a catalytic residue. N-linked (GlcNAc...) asparagine glycosylation is present at Asn289.

The protein belongs to the palmitoyl-protein thioesterase family.

The protein localises to the lysosome. The enzyme catalyses hexadecanoyl-CoA + H2O = hexadecanoate + CoA + H(+). It carries out the reaction S-hexadecanoyl-N-acetylcysteamine + H2O = N-acetylcysteamine + hexadecanoate + H(+). In terms of biological role, catalyzes the cleavage of thioester bonds from S-palmitoyl-CoA or S-palmitoyl-N-acetylcysteamine (unbranched structures) but does not have activity against palmitoylcysteine or palmitoylated proteins, branched structures or bulky head groups. Conversely, hydrolyzes both long and short chain fatty acyl-CoA substrate. This is Lysosomal thioesterase PPT2 (Ppt2) from Rattus norvegicus (Rat).